A 266-amino-acid chain; its full sequence is Oxygen-evolving enhancer protein 2-3, chloroplastic (266 aa).

Residues 1 to 80 (MASTQCFLHH…VGSKVSPADA (80 aa)) constitute a chloroplast transit peptide.

Belongs to the PsbP family.

Its subcellular location is the plastid. The protein resides in the chloroplast thylakoid membrane. Its function is as follows. May be involved in the regulation of photosystem II. The protein is Oxygen-evolving enhancer protein 2-3, chloroplastic (PSBP3) of Nicotiana tabacum (Common tobacco).